The chain runs to 226 residues: ATP-dependent dethiobiotin synthetase BioD (226 aa).

An ATP-binding site is contributed by D12–V17. T16 contacts Mg(2+). Residue K39 is part of the active site. S43 lines the substrate pocket. Residues D47, E108 to G111, N168 to C169, P200 to L202, and N207 each bind ATP. Mg(2+) is bound by residues D47 and E108.

The protein belongs to the dethiobiotin synthetase family. As to quaternary structure, homodimer. Requires Mg(2+) as cofactor.

It is found in the cytoplasm. The catalysed reaction is (7R,8S)-7,8-diammoniononanoate + CO2 + ATP = (4R,5S)-dethiobiotin + ADP + phosphate + 3 H(+). The enzyme catalyses (7R,8S)-8-amino-7-(carboxyamino)nonanoate + ATP = (4R,5S)-dethiobiotin + ADP + phosphate + H(+). It participates in cofactor biosynthesis; biotin biosynthesis; biotin from 7,8-diaminononanoate: step 1/2. In terms of biological role, catalyzes a mechanistically unusual reaction, the ATP-dependent insertion of CO2 between the N7 and N8 nitrogen atoms of 7,8-diaminopelargonic acid (DAPA, also called 7,8-diammoniononanoate) to form a ureido ring. This cyanobacterium does not encode bioA (which catalyzes the formation of the precursor for this reaction in the cannonical pathway), instead it encodes bioU, which replaces bioA and also performs the first half of the cannonical BioD reaction. Thus in this organism BioD has a different substrate. The chain is ATP-dependent dethiobiotin synthetase BioD from Cyanothece sp. (strain PCC 7425 / ATCC 29141).